Consider the following 335-residue polypeptide: Adenosine deaminase (335 aa).

His12 and His14 together coordinate Zn(2+). Substrate is bound by residues His14 and Asp16. His197 provides a ligand contact to Zn(2+). Catalysis depends on Glu200, which acts as the Proton donor. Asp278 provides a ligand contact to Zn(2+).

The protein belongs to the metallo-dependent hydrolases superfamily. Adenosine and AMP deaminases family. Adenosine deaminase subfamily. Zn(2+) serves as cofactor.

It carries out the reaction adenosine + H2O + H(+) = inosine + NH4(+). It catalyses the reaction 2'-deoxyadenosine + H2O + H(+) = 2'-deoxyinosine + NH4(+). Functionally, catalyzes the hydrolytic deamination of adenosine and 2-deoxyadenosine. The sequence is that of Adenosine deaminase from Clostridium botulinum (strain ATCC 19397 / Type A).